We begin with the raw amino-acid sequence, 173 residues long: MDPVEEVLNNPATRAYIHRLIGDEGINLLERFPKDGEHSDEDLAASTGINLNSVRHTLYTLYEKRLAEYHRIKNNETGWLTYLWQLRIDLLYDAIREDMETVLSKLERRARFEEENDFYICKDCHDIYTFTVAMGGNFTCPNCGQPLSHFENETLAKALRARIEIMKKTLGHA.

Positions 9–92 (NNPATRAYIH…LWQLRIDLLY (84 aa)) constitute an HTH TFE/IIEalpha-type domain.

Belongs to the TFE family. In terms of assembly, monomer. Interaction with RNA polymerase subunits RpoF and RpoE is necessary for Tfe stimulatory transcription activity. Able to interact with Tbp and RNA polymerase in the absence of DNA promoter. Interacts both with the preinitiation and elongation complexes.

In terms of biological role, transcription factor that plays a role in the activation of archaeal genes transcribed by RNA polymerase. Facilitates transcription initiation by enhancing TATA-box recognition by TATA-box-binding protein (Tbp), and transcription factor B (Tfb) and RNA polymerase recruitment. Not absolutely required for transcription in vitro, but particularly important in cases where Tbp or Tfb function is not optimal. It dynamically alters the nucleic acid-binding properties of RNA polymerases by stabilizing the initiation complex and destabilizing elongation complexes. Seems to translocate with the RNA polymerase following initiation and acts by binding to the non template strand of the transcription bubble in elongation complexes. In Methanoregula boonei (strain DSM 21154 / JCM 14090 / 6A8), this protein is Transcription factor E.